The sequence spans 924 residues: MDYKETLLMPQTEFPMRGNLPKREPEMQKKWEEMDIYRKVQERTKGRPLFVLHDGPPYANGDIHMGHALNKILKDIIVRYKSMSGFCAPYVPGWDTHGLPIETALTKQGVDRKSMSVAEFRKLCEQYAYEQIDNQRQQFKRLGVRGDWDNPYITLKPEYEAQQIKVFGEMAKKGLIYKGLKPVYWSPSSESALAEAEIEYKDKRSPSIYVAFPVKDGKGVLQGDERIVIWTTTPWTIPANLAIAVHPDLDYYIVEANGQKYVVAAALAESVAKEVGWEAWSVVKTVKGKELEYVVAKHPFYERDSLVVCGEHVTTDAGTGCVHTAPGHGEDDFIVGQKYGLPVLCPVDERGYMTEEAPGFAGMFYDEANKAITQKLEEVGALLKLSFITHSYPHDWRTKQPTIFRATTQWFASIDKIRDQLLDAIKETKWVPEWGEIRIHNMVRDRGDWCISRQRAWGVPIPVFYGENGEPIITDETIEHVSNLFRQYGSNVWFEREAKDLLPEGFTHPSSPNGLFTKETDIMDVWFDSGSSHQAVLVERDDLERPADLYLEGSDQYRGWFNSSLSTAVAVTGKAPYKGVLSHGFVLDGEGRKMSKSLGNVVVPAKVMEQLGADILRLWVASVDYQADVRISDNILKQVSEVYRKIRNTFRFMLGNLFDFDPNQNAVPVGELGELDRYMLAKLNKLIAKVKKAYDSYDFAAVYHEMNHFCTVELSAFYLDMAKDILYIEAADCRARRAVQTVLYETVVALAKLIAPILPHTADEVWEHIPNRKEQVESVQLTDMPEPMAIDGEEALLAKWDAFMDVRDDILKALENARNEKVIGKSLTASVTVYPKDEVRALLASINEDLRQLLIVSAFSVADESYDAAPAEAERLNHVAVIVRPAEGETCERCWTVTPDVGRDESHPTLCPRCAHIVNEHYSA.

The 'HIGH' region motif lies at 57–67 (PYANGDIHMGH). Glu-552 is a binding site for L-isoleucyl-5'-AMP. The 'KMSKS' region motif lies at 593-597 (KMSKS). ATP is bound at residue Lys-596. Zn(2+) contacts are provided by Cys-891, Cys-894, Cys-911, and Cys-914.

This sequence belongs to the class-I aminoacyl-tRNA synthetase family. IleS type 1 subfamily. In terms of assembly, monomer. Requires Zn(2+) as cofactor.

The protein resides in the cytoplasm. It carries out the reaction tRNA(Ile) + L-isoleucine + ATP = L-isoleucyl-tRNA(Ile) + AMP + diphosphate. Its function is as follows. Catalyzes the attachment of isoleucine to tRNA(Ile). As IleRS can inadvertently accommodate and process structurally similar amino acids such as valine, to avoid such errors it has two additional distinct tRNA(Ile)-dependent editing activities. One activity is designated as 'pretransfer' editing and involves the hydrolysis of activated Val-AMP. The other activity is designated 'posttransfer' editing and involves deacylation of mischarged Val-tRNA(Ile). The sequence is that of Isoleucine--tRNA ligase from Geobacillus thermodenitrificans (strain NG80-2).